Here is a 184-residue protein sequence, read N- to C-terminus: ATP synthase subunit b, chloroplastic (184 aa).

The helical transmembrane segment at 27-49 (LATNPINLSVVFGVLIFFGKGVL) threads the bilayer.

Belongs to the ATPase B chain family. F-type ATPases have 2 components, F(1) - the catalytic core - and F(0) - the membrane proton channel. F(1) has five subunits: alpha(3), beta(3), gamma(1), delta(1), epsilon(1). F(0) has four main subunits: a(1), b(1), b'(1) and c(10-14). The alpha and beta chains form an alternating ring which encloses part of the gamma chain. F(1) is attached to F(0) by a central stalk formed by the gamma and epsilon chains, while a peripheral stalk is formed by the delta, b and b' chains.

Its subcellular location is the plastid. The protein localises to the chloroplast thylakoid membrane. Functionally, f(1)F(0) ATP synthase produces ATP from ADP in the presence of a proton or sodium gradient. F-type ATPases consist of two structural domains, F(1) containing the extramembraneous catalytic core and F(0) containing the membrane proton channel, linked together by a central stalk and a peripheral stalk. During catalysis, ATP synthesis in the catalytic domain of F(1) is coupled via a rotary mechanism of the central stalk subunits to proton translocation. Its function is as follows. Component of the F(0) channel, it forms part of the peripheral stalk, linking F(1) to F(0). The sequence is that of ATP synthase subunit b, chloroplastic from Lobularia maritima (Sweet alyssum).